Consider the following 284-residue polypeptide: Orotidine 5'-phosphate decarboxylase (284 aa).

Residues D42, 64–66 (KTH), 96–105 (DRKFADIGNT), Y237, and R255 each bind substrate. K98 (proton donor) is an active-site residue.

This sequence belongs to the OMP decarboxylase family.

It carries out the reaction orotidine 5'-phosphate + H(+) = UMP + CO2. It participates in pyrimidine metabolism; UMP biosynthesis via de novo pathway; UMP from orotate: step 2/2. The sequence is that of Orotidine 5'-phosphate decarboxylase (URA3) from Magnusiomyces magnusii (Yeast).